The sequence spans 201 residues: 3-isopropylmalate dehydratase small subunit (201 aa).

This sequence belongs to the LeuD family. LeuD type 1 subfamily. Heterodimer of LeuC and LeuD.

It catalyses the reaction (2R,3S)-3-isopropylmalate = (2S)-2-isopropylmalate. The protein operates within amino-acid biosynthesis; L-leucine biosynthesis; L-leucine from 3-methyl-2-oxobutanoate: step 2/4. Its function is as follows. Catalyzes the isomerization between 2-isopropylmalate and 3-isopropylmalate, via the formation of 2-isopropylmaleate. In Shewanella denitrificans (strain OS217 / ATCC BAA-1090 / DSM 15013), this protein is 3-isopropylmalate dehydratase small subunit.